The primary structure comprises 382 residues: MKALHFGAGNIGRGFIGKLLAESDAEVTFADANTQLVDQLNHSQEYHVRVVGDNQHTDVIRHIAAVQANSDDVINQIIKADIITTAVGPQVLAKIAATIARGLQLRFEQGNYAPVNIIACENMVRGTSQLKQAVLAELPAQYHAQLEEYVGFVDSAVDRIVPPAAANDEDPLAVTVESFSEWIVDKNQFRGDIPPVQGMELTDNLIAYVERKLFTLNTGHIVTAYLGKLAGYKTIREAIADEEIQQAVRQAMQQSGEVLVKRYGFDRQLHHAYIEKILTRFANPYLVDEIDRVGRQPLRKLGAEDRLTKPLLGTLEYGLPNDALLKGIAAALHYRNADDPQAVELQGWIEQDGVEAALLRATGLKADEPCVATIVAEYQRMA.

3-14 serves as a coordination point for NAD(+); that stretch reads ALHFGAGNIGRG.

Belongs to the mannitol dehydrogenase family.

It catalyses the reaction D-mannitol 1-phosphate + NAD(+) = beta-D-fructose 6-phosphate + NADH + H(+). This Tolumonas auensis (strain DSM 9187 / NBRC 110442 / TA 4) protein is Mannitol-1-phosphate 5-dehydrogenase.